The chain runs to 524 residues: Bifunctional purine biosynthesis protein PurH (524 aa).

The 145-residue stretch at 1 to 145 (MIKQALLSVS…KNHRDVTVIV (145 aa)) folds into the MGS-like domain.

This sequence belongs to the PurH family.

The enzyme catalyses (6R)-10-formyltetrahydrofolate + 5-amino-1-(5-phospho-beta-D-ribosyl)imidazole-4-carboxamide = 5-formamido-1-(5-phospho-D-ribosyl)imidazole-4-carboxamide + (6S)-5,6,7,8-tetrahydrofolate. It catalyses the reaction IMP + H2O = 5-formamido-1-(5-phospho-D-ribosyl)imidazole-4-carboxamide. The protein operates within purine metabolism; IMP biosynthesis via de novo pathway; 5-formamido-1-(5-phospho-D-ribosyl)imidazole-4-carboxamide from 5-amino-1-(5-phospho-D-ribosyl)imidazole-4-carboxamide (10-formyl THF route): step 1/1. It participates in purine metabolism; IMP biosynthesis via de novo pathway; IMP from 5-formamido-1-(5-phospho-D-ribosyl)imidazole-4-carboxamide: step 1/1. The chain is Bifunctional purine biosynthesis protein PurH from Cupriavidus taiwanensis (strain DSM 17343 / BCRC 17206 / CCUG 44338 / CIP 107171 / LMG 19424 / R1) (Ralstonia taiwanensis (strain LMG 19424)).